An 865-amino-acid polypeptide reads, in one-letter code: Aconitate hydratase B (865 aa).

Substrate is bound by residues R191, S244–R246, Q414–T416, and S498. 3 residues coordinate [4Fe-4S] cluster: C710, C769, and C772. Substrate contacts are provided by R791 and R796.

The protein belongs to the aconitase/IPM isomerase family. Monomer. [4Fe-4S] cluster serves as cofactor.

It carries out the reaction citrate = D-threo-isocitrate. The enzyme catalyses (2S,3R)-3-hydroxybutane-1,2,3-tricarboxylate = 2-methyl-cis-aconitate + H2O. It participates in carbohydrate metabolism; tricarboxylic acid cycle; isocitrate from oxaloacetate: step 2/2. It functions in the pathway organic acid metabolism; propanoate degradation. Its function is as follows. Involved in the catabolism of short chain fatty acids (SCFA) via the tricarboxylic acid (TCA)(acetyl degradation route) and the 2-methylcitrate cycle I (propionate degradation route). Catalyzes the reversible isomerization of citrate to isocitrate via cis-aconitate. Also catalyzes the hydration of 2-methyl-cis-aconitate to yield (2R,3S)-2-methylisocitrate. The apo form of AcnB functions as a RNA-binding regulatory protein which regulates FliC synthesis via interaction with the ftsH transcript to decrease the intracellular levels of FtsH. The lower levels of FtsH protease activity then influence sigma-32, DnaK and ultimately FliC production. This is Aconitate hydratase B (acnB) from Salmonella typhimurium (strain LT2 / SGSC1412 / ATCC 700720).